A 580-amino-acid chain; its full sequence is Pentatricopeptide repeat-containing protein At5g10690 (580 aa).

PPR repeat units lie at residues 76–110 (NTIVMNSVLEACVHCGNIDLALRMFHEMAEPGGIG), 112–142 (DSISYATILKGLGKARRIDEAFQMLETIEYG), 151–181 (SSSLIYGLLDALINAGDLRRANGLLARYDIL), 189–223 (SVLIYNLLMKGYVNSESPQAAINLLDEMLRLRLEP), 224–254 (DRLTYNTLIHACIKCGDLDAAMKFFNDMKEK), 266–296 (DVVTYTTLVKGFGDATDLLSLQEIFLEMKLC), 302–337 (DRTAFTAVVDAMLKCGSTSGALCVFGEILKRSGANE), 342–376 (KPHLYLSMMRAFAVQGDYGMVRNLYLRLWPDSSGS), and 382–417 (QQEADNLLMEAALNDGQLDEALGILLSIVRRWKTIP). The CBS domain maps to 486–553 (VPIVDDRGSC…IVVHCGNFSG (68 aa)).

This sequence belongs to the PPR family. P subfamily.

The sequence is that of Pentatricopeptide repeat-containing protein At5g10690 (CBSPPR1) from Arabidopsis thaliana (Mouse-ear cress).